The primary structure comprises 640 residues: Threonine--tRNA ligase (640 aa).

The 61-residue stretch at 1–61 folds into the TGS domain; sequence MPVVTLPDGS…DKDSHLAIIT (61 aa). A catalytic region spans residues 242–533; it reads DHRRLGKQLD…LIENHAGNMP (292 aa). Residues C333, H384, and H510 each contribute to the Zn(2+) site.

This sequence belongs to the class-II aminoacyl-tRNA synthetase family. As to quaternary structure, homodimer. It depends on Zn(2+) as a cofactor.

Its subcellular location is the cytoplasm. The catalysed reaction is tRNA(Thr) + L-threonine + ATP = L-threonyl-tRNA(Thr) + AMP + diphosphate + H(+). In terms of biological role, catalyzes the attachment of threonine to tRNA(Thr) in a two-step reaction: L-threonine is first activated by ATP to form Thr-AMP and then transferred to the acceptor end of tRNA(Thr). Also edits incorrectly charged L-seryl-tRNA(Thr). In Polynucleobacter asymbioticus (strain DSM 18221 / CIP 109841 / QLW-P1DMWA-1) (Polynucleobacter necessarius subsp. asymbioticus), this protein is Threonine--tRNA ligase.